The chain runs to 379 residues: Diaminopimelate decarboxylase (379 aa).

Lys-48 bears the N6-(pyridoxal phosphate)lysine mark. Pyridoxal 5'-phosphate-binding positions include Gly-214 and 242–245 (EPGR). Arg-245, Arg-280, and Tyr-284 together coordinate substrate. The Proton donor role is filled by Cys-309. Residues Glu-310 and Tyr-338 each coordinate substrate. Tyr-338 serves as a coordination point for pyridoxal 5'-phosphate.

The protein belongs to the Orn/Lys/Arg decarboxylase class-II family. LysA subfamily. As to quaternary structure, homodimer. Requires pyridoxal 5'-phosphate as cofactor.

The catalysed reaction is meso-2,6-diaminopimelate + H(+) = L-lysine + CO2. It functions in the pathway amino-acid biosynthesis; L-lysine biosynthesis via DAP pathway; L-lysine from DL-2,6-diaminopimelate: step 1/1. In terms of biological role, specifically catalyzes the decarboxylation of meso-diaminopimelate (meso-DAP) to L-lysine. The polypeptide is Diaminopimelate decarboxylase (Deinococcus radiodurans (strain ATCC 13939 / DSM 20539 / JCM 16871 / CCUG 27074 / LMG 4051 / NBRC 15346 / NCIMB 9279 / VKM B-1422 / R1)).